The chain runs to 197 residues: Holliday junction branch migration complex subunit RuvA (197 aa).

The domain I stretch occupies residues 1 to 63; sequence MISSLRGEVL…EDSMTLYGFV (63 aa). Residues 64–139 form a domain II region; the sequence is DGETRDLFLT…KVGPAGSAAT (76 aa). The flexible linker stretch occupies residues 139 to 143; that stretch reads TAPAV. Positions 144 to 197 are domain III; it reads NGHTVRAPVVEALVGLGFAAKQAEEATDKVLAGDGEATTSSALRAALSLLGKAR.

Belongs to the RuvA family. Homotetramer. Forms an RuvA(8)-RuvB(12)-Holliday junction (HJ) complex. HJ DNA is sandwiched between 2 RuvA tetramers; dsDNA enters through RuvA and exits via RuvB. An RuvB hexamer assembles on each DNA strand where it exits the tetramer. Each RuvB hexamer is contacted by two RuvA subunits (via domain III) on 2 adjacent RuvB subunits; this complex drives branch migration. In the full resolvosome a probable DNA-RuvA(4)-RuvB(12)-RuvC(2) complex forms which resolves the HJ.

Its subcellular location is the cytoplasm. Functionally, the RuvA-RuvB-RuvC complex processes Holliday junction (HJ) DNA during genetic recombination and DNA repair, while the RuvA-RuvB complex plays an important role in the rescue of blocked DNA replication forks via replication fork reversal (RFR). RuvA specifically binds to HJ cruciform DNA, conferring on it an open structure. The RuvB hexamer acts as an ATP-dependent pump, pulling dsDNA into and through the RuvAB complex. HJ branch migration allows RuvC to scan DNA until it finds its consensus sequence, where it cleaves and resolves the cruciform DNA. The sequence is that of Holliday junction branch migration complex subunit RuvA from Mycobacterium marinum (strain ATCC BAA-535 / M).